A 157-amino-acid polypeptide reads, in one-letter code: MRIGHGYDVHKLVENRKLILGGVDIPYERGLLGHSDADVLLHAISDAILGAIGEGDIGKHFPDTDPAYKGADSIKLLMHVMALAVGKGYAIGNLDATIVAQRPKLAPHIPQMRENIARALKADADRINVKATTTEELGFAGRGEGIAAYTVVLLERK.

A divalent metal cation-binding residues include aspartate 8 and histidine 10. Residues 8 to 10 (DVH) and 34 to 35 (HS) contribute to the 4-CDP-2-C-methyl-D-erythritol 2-phosphate site. Position 42 (histidine 42) interacts with a divalent metal cation. Residues 56-58 (DIG), 61-65 (FPDTD), 132-135 (TTTE), phenylalanine 139, and arginine 142 each bind 4-CDP-2-C-methyl-D-erythritol 2-phosphate.

Belongs to the IspF family. As to quaternary structure, homotrimer. A divalent metal cation serves as cofactor.

The enzyme catalyses 4-CDP-2-C-methyl-D-erythritol 2-phosphate = 2-C-methyl-D-erythritol 2,4-cyclic diphosphate + CMP. The protein operates within isoprenoid biosynthesis; isopentenyl diphosphate biosynthesis via DXP pathway; isopentenyl diphosphate from 1-deoxy-D-xylulose 5-phosphate: step 4/6. In terms of biological role, involved in the biosynthesis of isopentenyl diphosphate (IPP) and dimethylallyl diphosphate (DMAPP), two major building blocks of isoprenoid compounds. Catalyzes the conversion of 4-diphosphocytidyl-2-C-methyl-D-erythritol 2-phosphate (CDP-ME2P) to 2-C-methyl-D-erythritol 2,4-cyclodiphosphate (ME-CPP) with a corresponding release of cytidine 5-monophosphate (CMP). This Geotalea uraniireducens (strain Rf4) (Geobacter uraniireducens) protein is 2-C-methyl-D-erythritol 2,4-cyclodiphosphate synthase.